The primary structure comprises 449 residues: UDP-N-acetylmuramate--L-alanine ligase (449 aa).

ATP is bound at residue 118–124; it reads GTHGKTT.

The protein belongs to the MurCDEF family.

Its subcellular location is the cytoplasm. It carries out the reaction UDP-N-acetyl-alpha-D-muramate + L-alanine + ATP = UDP-N-acetyl-alpha-D-muramoyl-L-alanine + ADP + phosphate + H(+). Its pathway is cell wall biogenesis; peptidoglycan biosynthesis. Its function is as follows. Cell wall formation. The sequence is that of UDP-N-acetylmuramate--L-alanine ligase from Flavobacterium johnsoniae (strain ATCC 17061 / DSM 2064 / JCM 8514 / BCRC 14874 / CCUG 350202 / NBRC 14942 / NCIMB 11054 / UW101) (Cytophaga johnsonae).